Consider the following 120-residue polypeptide: Large ribosomal subunit protein bL17 (120 aa).

Belongs to the bacterial ribosomal protein bL17 family. As to quaternary structure, part of the 50S ribosomal subunit. Contacts protein L32.

The protein is Large ribosomal subunit protein bL17 of Mycoplasmopsis synoviae (strain 53) (Mycoplasma synoviae).